Here is a 126-residue protein sequence, read N- to C-terminus: Protein ApaG (126 aa).

In terms of domain architecture, ApaG spans 2-126; sequence ADKLYQMEVQ…MTLVAPRVLH (125 aa).

The polypeptide is Protein ApaG (Chromobacterium violaceum (strain ATCC 12472 / DSM 30191 / JCM 1249 / CCUG 213 / NBRC 12614 / NCIMB 9131 / NCTC 9757 / MK)).